We begin with the raw amino-acid sequence, 223 residues long: Endo-1,4-beta-xylanase 2 (223 aa).

An N-terminal signal peptide occupies residues 1–19 (MVSFTSLLAGVAAISGVLA). A propeptide spanning residues 20 to 33 (APAAEVESVAVEKR) is cleaved from the precursor. Q34 is subject to Pyrrolidone carboxylic acid. The region spanning 34-222 (QTIQPGTGYN…FSSGSASITV (189 aa)) is the GH11 domain. 2 N-linked (GlcNAc...) asparagine glycosylation sites follow: N71 and N94. Positions 106 and 110 each coordinate substrate. E119 serves as the catalytic Nucleophile. Residues Y121, R155, P159, Q169, and Y204 each coordinate substrate. The active-site Proton donor is the E210.

The protein belongs to the glycosyl hydrolase 11 (cellulase G) family.

The protein resides in the secreted. It carries out the reaction Endohydrolysis of (1-&gt;4)-beta-D-xylosidic linkages in xylans.. The protein operates within glycan degradation; xylan degradation. Glycoside hydrolase involved in the hydrolysis of xylan, a major plant cell wall hemicellulose made up of 1,4-beta-linked D-xylopyranose residues. Catalyzes the endohydrolysis of the main-chain 1,4-beta-glycosidic bonds connecting the xylose subunits yielding various xylooligosaccharides and xylose. The catalysis proceeds by a double-displacement reaction mechanism with a putative covalent glycosyl-enzyme intermediate, with retention of the anomeric configuration. Produces xylobiose and xylose as the main degradation products. The polypeptide is Endo-1,4-beta-xylanase 2 (Hypocrea jecorina (strain ATCC 56765 / BCRC 32924 / NRRL 11460 / Rut C-30) (Trichoderma reesei)).